Here is a 595-residue protein sequence, read N- to C-terminus: GPI mannosyltransferase 3 (595 aa).

A run of 10 helical transmembrane segments spans residues 58-78 (YAFP…GVAT), 85-105 (LAHA…GVAA), 128-148 (GPRV…VLLV), 185-207 (FFAT…LYHW), 212-232 (GLDV…FACL), 235-255 (PTNV…LVRS), 260-280 (LLLT…CANI), 289-309 (GVLL…LAAF), 319-339 (LLQS…GALL), and 413-433 (VQSL…VLNT).

The protein belongs to the glycosyltransferase 22 family. PIGB subfamily.

It localises to the endoplasmic reticulum membrane. Its pathway is glycolipid biosynthesis; glycosylphosphatidylinositol-anchor biosynthesis. In terms of biological role, mannosyltransferase involved in glycosylphosphatidylinositol-anchor biosynthesis. Transfers the third mannose to Man2-GlcN-acyl-PI during GPI precursor assembly. In Eremothecium gossypii (strain ATCC 10895 / CBS 109.51 / FGSC 9923 / NRRL Y-1056) (Yeast), this protein is GPI mannosyltransferase 3 (GPI10).